Here is a 908-residue protein sequence, read N- to C-terminus: Zinc finger and BTB domain-containing protein 41 (908 aa).

Residues 38–59 (TQAPERPTPEAAQRCQELPPSP) are disordered. Positions 89-153 (CDLLIIVEGK…LYTSEFFVYK (65 aa)) constitute a BTB domain. The C2H2-type 1 zinc-finger motif lies at 208–231 (HQCKFCSRHFCYKKSLENHLAKTH). Residues 252–261 (RRSKRNRKCP) show a composition bias toward basic residues. Residues 252 to 344 (RRSKRNRKCP…EAGDSAGSIH (93 aa)) are disordered. Residues 267-276 (TSDDEQESGD) are compositionally biased toward acidic residues. A compositionally biased stretch (basic and acidic residues) spans 279–296 (DNLHQESSEKERSDRNDS). Residues 297–336 (EDPGSEYNAEDEELEEEVSDEDSDTEQSDKDNDAEEEPEA) show a composition bias toward acidic residues. 13 C2H2-type zinc fingers span residues 360-382 (LQCP…TRVH), 388-410 (FECD…RKKH), 421-444 (HKCP…KRFH), 462-484 (WKCD…MILH), 490-513 (FKCT…EKFH), 517-540 (FPCD…ECTH), 546-568 (WTCF…LRIH), 574-596 (HLCS…LRVH), 602-624 (YECD…KKIH), 630-653 (HQCE…KSVH), 667-689 (HQCD…FRTH), 695-717 (YKCQ…LVIH), and 723-746 (FNCQ…DHVH).

It localises to the nucleus. In terms of biological role, may be involved in transcriptional regulation. This Mus musculus (Mouse) protein is Zinc finger and BTB domain-containing protein 41 (Zbtb41).